Here is a 485-residue protein sequence, read N- to C-terminus: Glutamyl-tRNA(Gln) amidotransferase subunit A (485 aa).

Residues Lys78 and Ser153 each act as charge relay system in the active site. The Acyl-ester intermediate role is filled by Ser177.

Belongs to the amidase family. GatA subfamily. In terms of assembly, heterotrimer of A, B and C subunits.

It carries out the reaction L-glutamyl-tRNA(Gln) + L-glutamine + ATP + H2O = L-glutaminyl-tRNA(Gln) + L-glutamate + ADP + phosphate + H(+). In terms of biological role, allows the formation of correctly charged Gln-tRNA(Gln) through the transamidation of misacylated Glu-tRNA(Gln) in organisms which lack glutaminyl-tRNA synthetase. The reaction takes place in the presence of glutamine and ATP through an activated gamma-phospho-Glu-tRNA(Gln). The chain is Glutamyl-tRNA(Gln) amidotransferase subunit A from Desulfatibacillum aliphaticivorans.